Reading from the N-terminus, the 445-residue chain is Phosphoglucosamine mutase (445 aa).

Residue serine 104 is the Phosphoserine intermediate of the active site. 4 residues coordinate Mg(2+): serine 104, aspartate 243, aspartate 245, and aspartate 247. Residue serine 104 is modified to Phosphoserine.

It belongs to the phosphohexose mutase family. Mg(2+) serves as cofactor. Activated by phosphorylation.

The enzyme catalyses alpha-D-glucosamine 1-phosphate = D-glucosamine 6-phosphate. Its function is as follows. Catalyzes the conversion of glucosamine-6-phosphate to glucosamine-1-phosphate. In Chromobacterium violaceum (strain ATCC 12472 / DSM 30191 / JCM 1249 / CCUG 213 / NBRC 12614 / NCIMB 9131 / NCTC 9757 / MK), this protein is Phosphoglucosamine mutase.